The primary structure comprises 633 residues: MFYQQQFDVIVVGGGHAGTEAALAAARMGSKTLLLTHNVETLGQMSCNPAIGGIGKGHLVKEIDALGGSMAKAIDKGGIQFRTLNSSKGPAVRATRAQADRSLYRSAIRDIVEHQDNLTLFQQSCDDLIVENDQVTGVVTQMGLKFRAKSVVITVGTFLGGTIHIGMENYKGGRAGDPPSIALADRLRALPFRVSRLKTGTPARLDARTLDYSVMQEQLGDSPTPVFSFMGKREDHPRQIACYITHTNSKTHDIIRGGLDRSPMYTGVIEGIGPRYCPSIEDKINRFADKDSHQIFVEPEGLNSIEVYPNGISTSLPFDVQFELVRSIKGFENAHIIRPGYAIEYDFFDPRDLKQTLETKFIKGLFFAGQINGTTGYEEAGAQGLIAGANASLQCQGKDPLILRRDEAYMGVLIDDLATMGTKEPYRMFTSRAEYRLLLREDNADIRLTAKGHELGLVDEERWQAFNIKLEAIELERQRLRDTWVHPKHAAAEALNPLLKNALSKENTLEDLIRRPEMTYETLMNVTEFGPGITDPKAAEQVEIQIKYAGYIERQQDEIAKSRKNENTLIPLDFDYSQISGLSNEVVAKLSDAKPETLGLASRISGITPAAISLLLVYLKKHGLLRKTERKTA.

Position 13 to 18 (13 to 18 (GGGHAG)) interacts with FAD. 273–287 (GPRYCPSIEDKINRF) is a binding site for NAD(+).

The protein belongs to the MnmG family. As to quaternary structure, homodimer. Heterotetramer of two MnmE and two MnmG subunits. Requires FAD as cofactor.

Its subcellular location is the cytoplasm. Functionally, NAD-binding protein involved in the addition of a carboxymethylaminomethyl (cmnm) group at the wobble position (U34) of certain tRNAs, forming tRNA-cmnm(5)s(2)U34. This Pseudoalteromonas atlantica (strain T6c / ATCC BAA-1087) protein is tRNA uridine 5-carboxymethylaminomethyl modification enzyme MnmG.